Reading from the N-terminus, the 268-residue chain is Expansin-B3 (268 aa).

The signal sequence occupies residues 1 to 25 (MAFSISKKAAVAALFSFLVVTCVAG). Asn-30 carries an N-linked (GlcNAc...) asparagine glycan. The region spanning 62–168 (GGACGFKNTN…KRVPCNFPGL (107 aa)) is the Expansin-like EG45 domain. Disulfide bonds link Cys-65/Cys-93, Cys-96/Cys-163, and Cys-101/Cys-107. Residues 181 to 262 (VYFAVLVEYE…NWAPMAVYRS (82 aa)) form the Expansin-like CBD domain. Residue Asn-238 is glycosylated (N-linked (GlcNAc...) asparagine).

Belongs to the expansin family. Expansin B subfamily. Expressed in roots, coleoptiles and internodes.

It localises to the secreted. It is found in the cell wall. The protein resides in the membrane. Its function is as follows. May cause loosening and extension of plant cell walls by disrupting non-covalent bonding between cellulose microfibrils and matrix glucans. No enzymatic activity has been found. May be required for rapid internodal elongation in deepwater rice during submergence. This Oryza sativa subsp. japonica (Rice) protein is Expansin-B3 (EXPB3).